The following is a 490-amino-acid chain: Betaine aldehyde dehydrogenase (490 aa).

K(+) is bound by residues Thr-26, Ile-27, and Asp-93. Residue 150 to 152 (GAW) participates in NAD(+) binding. Lys-162 (charge relay system) is an active-site residue. Residue 176-179 (KPSE) coordinates NAD(+). Val-180 provides a ligand contact to K(+). 230–233 (GVAS) lines the NAD(+) pocket. Leu-246 is a binding site for K(+). Glu-252 acts as the Proton acceptor in catalysis. NAD(+)-binding residues include Gly-254, Cys-286, and Glu-387. Cys-286 acts as the Nucleophile in catalysis. Cys-286 is subject to Cysteine sulfenic acid (-SOH). K(+) contacts are provided by Lys-457 and Gly-460. Glu-464 functions as the Charge relay system in the catalytic mechanism.

The protein belongs to the aldehyde dehydrogenase family. As to quaternary structure, dimer of dimers. Requires K(+) as cofactor.

It catalyses the reaction betaine aldehyde + NAD(+) + H2O = glycine betaine + NADH + 2 H(+). It participates in amine and polyamine biosynthesis; betaine biosynthesis via choline pathway; betaine from betaine aldehyde: step 1/1. Functionally, involved in the biosynthesis of the osmoprotectant glycine betaine. Catalyzes the irreversible oxidation of betaine aldehyde to the corresponding acid. The chain is Betaine aldehyde dehydrogenase from Shigella flexneri serotype 5b (strain 8401).